Consider the following 291-residue polypeptide: m-AAA protease-interacting protein 1, mitochondrial (291 aa).

The N-terminal 96 residues, Met1–Tyr96, are a transit peptide targeting the mitochondrion.

In terms of assembly, interacts with AFG3L2. Interacts with SPG7. Interacts with SMDT1/EMRE (via the N-terminal transit peptide); interaction is direct and takes place before maturation of SMDT1/EMRE.

It is found in the mitochondrion matrix. In terms of biological role, promotes sorting of SMDT1/EMRE in mitochondria by ensuring its maturation. Interacts with the transit peptide region of SMDT1/EMRE precursor protein in the mitochondrial matrix, leading to protect it against protein degradation by YME1L1, thereby ensuring SMDT1/EMRE maturation by the mitochondrial processing peptidase (PMPCA and PMPCB). The chain is m-AAA protease-interacting protein 1, mitochondrial from Rattus norvegicus (Rat).